Consider the following 232-residue polypeptide: MYEAVCAHPDGDSTVARLAATAASAGYDGIVVRNWGATSADPDAVGADTDADVVRGTTVSVTDRAGASERIRRRRENAVVVAARASSPSLNRFVAESERVDVLAAPMADGGDVNHVIVKAARTHGVRLEFDFAGVLRASGGDRVQALRGLRKLRELVEHYDAPFVVSGRPASHLHVRSPRELVAVGAEIGFTDAQVRAGLREWTHLAARNRRRLSAEFIAPGVKRGRYEEDP.

Belongs to the eukaryotic/archaeal RNase P protein component 3 family. In terms of assembly, consists of a catalytic RNA component and at least 4-5 protein subunits.

The protein resides in the cytoplasm. The catalysed reaction is Endonucleolytic cleavage of RNA, removing 5'-extranucleotides from tRNA precursor.. Functionally, part of ribonuclease P, a protein complex that generates mature tRNA molecules by cleaving their 5'-ends. This Halobacterium salinarum (strain ATCC 29341 / DSM 671 / R1) protein is Ribonuclease P protein component 3.